The primary structure comprises 419 residues: Putative BTB/POZ domain-containing protein L85 (419 aa).

The 74-residue stretch at 16-89 (TDLTIVLKDD…FYDKTSTNSE (74 aa)) folds into the BTB domain. Positions 250–290 (SSSNDSDEDASETESEHNSETESEHNSETESEHNSETESKH) are disordered. The span at 263–290 (ESEHNSETESEHNSETESEHNSETESKH) shows a compositional bias: basic and acidic residues.

It belongs to the mimivirus BTB/WD family.

In Acanthamoeba polyphaga (Amoeba), this protein is Putative BTB/POZ domain-containing protein L85.